Consider the following 144-residue polypeptide: Maximins 8/H7 (144 aa).

An N-terminal signal peptide occupies residues 1 to 18 (MKFKYIVAVSFLIASAYA). Residues 19-43 (RSEENDEQSLSQRDVLEEESLREIR) constitute a propeptide that is removed on maturation. Asn70 is subject to Asparagine amide. Positions 74-123 (TAEDHEVMKRLEAVMRDLDSLDYPEEASERETRGFNQEEIANLFTKKEKR) are excised as a propeptide. Leucine amide is present on Leu143.

The protein belongs to the bombinin family. Expressed by the skin glands.

Its subcellular location is the secreted. Maximin-8 shows antimicrobial activity against bacteria and against the fungus C.albicans. It has little hemolytic activity. Functionally, maximin-H7 shows antimicrobial activity against bacteria and against the fungus C.albicans. Shows strong hemolytic activity. The protein is Maximins 8/H7 of Bombina maxima (Giant fire-bellied toad).